The sequence spans 24 residues: Brevinin-1 (24 aa).

The cysteines at positions 18 and 24 are disulfide-linked.

This sequence belongs to the frog skin active peptide (FSAP) family. Brevinin subfamily. Expressed by the skin glands.

It is found in the secreted. Functionally, shows antibacterial activity against representative Gram-negative and Gram-positive bacterial species, and a very high hemolytic activity. The protein is Brevinin-1 of Pelophylax porosus brevipodus (Nagoya Daruma pond frog).